The chain runs to 224 residues: Flagellar L-ring protein (224 aa).

Residues 1–15 form the signal peptide; sequence MKWYLVALSGLLLSG. Cys-16 carries N-palmitoyl cysteine lipidation. A lipid anchor (S-diacylglycerol cysteine) is attached at Cys-16.

Belongs to the FlgH family. In terms of assembly, the basal body constitutes a major portion of the flagellar organelle and consists of four rings (L,P,S, and M) mounted on a central rod.

It is found in the cell outer membrane. Its subcellular location is the bacterial flagellum basal body. Its function is as follows. Assembles around the rod to form the L-ring and probably protects the motor/basal body from shearing forces during rotation. The polypeptide is Flagellar L-ring protein (Trichlorobacter lovleyi (strain ATCC BAA-1151 / DSM 17278 / SZ) (Geobacter lovleyi)).